The following is a 410-amino-acid chain: Lissencephaly-1 homolog (410 aa).

A LisH domain is found at 7–39; sequence QRDELNRAIADYLRSNGYEEAYSVFKKEAELDM. Residues 56–82 are a coiled coil; sequence TSVIRLQKKVMELESKLNEAKEEFTSG. WD repeat units follow at residues 106–147, 148–187, 190–229, 232–271, 274–333, 336–377, and 379–410; these read GHRS…RTLK, GHTD…CIRT, GHDH…CVKT, GHRE…CKAE, EHEH…CLMT, GHDN…KTLN, and HEHF…WECR.

Belongs to the WD repeat LIS1/nudF family. Can self-associate. Component of the cytosolic PAF-AH (I) heterotetrameric enzyme, which is composed of PAFAH1B1 (beta), PAFAH1B2 (alpha2) and PAFAH1B3 (alpha1) subunits. The catalytic activity of the enzyme resides in the alpha1 (PAFAH1B3) and alpha2 (PAFAH1B2) subunits, whereas the beta subunit (PAFAH1B1) has regulatory activity. Trimer formation is not essential for the catalytic activity. Interacts with dynein, dynactin, nde1 and ndel1.

The protein resides in the cytoplasm. Its subcellular location is the cytoskeleton. It is found in the microtubule organizing center. The protein localises to the centrosome. In terms of biological role, regulatory subunit (beta subunit) of the cytosolic type I platelet-activating factor (PAF) acetylhydrolase (PAF-AH (I)), an enzyme that catalyzes the hydrolyze of the acetyl group at the sn-2 position of PAF and its analogs and participates in the PAF inactivation. Positively regulates the activity of the minus-end directed microtubule motor protein dynein. May enhance dynein-mediated microtubule sliding by targeting dynein to the microtubule plus end. Required for several dynein- and microtubule-dependent processes such as the maintenance of Golgi integrity, the peripheral transport of microtubule fragments and the coupling of the nucleus and centrosome. May be required for proliferation of neuronal precursors and neuronal migration. The protein is Lissencephaly-1 homolog (pafah1b1) of Xenopus tropicalis (Western clawed frog).